A 377-amino-acid polypeptide reads, in one-letter code: Serine/threonine-protein phosphatase PP2A-2 catalytic subunit (377 aa).

The disordered stretch occupies residues 1-66 (MDMEIDDPMH…SGIADHKSSK (66 aa)). A compositionally biased stretch (basic and acidic residues) spans 28-40 (DDGKNNTKARSND). Ser38 is modified (phosphoserine). Position 43 is a phosphothreonine (Thr43). Mn(2+)-binding residues include Asp125, His127, Asp153, and Asn185. His186 acts as the Proton donor in catalysis. Positions 235 and 309 each coordinate Mn(2+). At Leu377 the chain carries Leucine methyl ester.

Belongs to the PPP phosphatase family. PP-2A subfamily. In terms of assembly, inactivated in a complex with phosphatase methylesterase PPE1 (PP2Ai). Interacts with phosphatase 2A activator RRD2, which can reactivate PP2Ai by dissociating the catalytic subunit from the complex. Interacts with TAP42. Requires Mn(2+) as cofactor. Post-translationally, reversibly methyl esterified on Leu-377 by leucine carboxyl methyltransferase 1 (PPM1) and protein phosphatase methylesterase 1 (PPE1). Carboxyl methylation influences the affinity of the catalytic subunit for the different regulatory subunits, thereby modulating the PP2A holoenzyme's substrate specificity, enzyme activity and cellular localization.

The catalysed reaction is O-phospho-L-seryl-[protein] + H2O = L-seryl-[protein] + phosphate. The enzyme catalyses O-phospho-L-threonyl-[protein] + H2O = L-threonyl-[protein] + phosphate. Its function is as follows. Exact function not known, phosphatase 2A performs an essential cellular function. This Saccharomyces cerevisiae (strain ATCC 204508 / S288c) (Baker's yeast) protein is Serine/threonine-protein phosphatase PP2A-2 catalytic subunit (PPH22).